A 337-amino-acid polypeptide reads, in one-letter code: Lipoyl synthase (337 aa).

Residues Cys-81, Cys-86, Cys-92, Cys-107, Cys-111, Cys-114, and Ser-323 each contribute to the [4Fe-4S] cluster site. The region spanning 93–312 is the Radical SAM core domain; sequence FSHGTATFMI…EDYGNALGFS (220 aa).

Belongs to the radical SAM superfamily. Lipoyl synthase family. [4Fe-4S] cluster serves as cofactor.

The protein localises to the cytoplasm. It carries out the reaction [[Fe-S] cluster scaffold protein carrying a second [4Fe-4S](2+) cluster] + N(6)-octanoyl-L-lysyl-[protein] + 2 oxidized [2Fe-2S]-[ferredoxin] + 2 S-adenosyl-L-methionine + 4 H(+) = [[Fe-S] cluster scaffold protein] + N(6)-[(R)-dihydrolipoyl]-L-lysyl-[protein] + 4 Fe(3+) + 2 hydrogen sulfide + 2 5'-deoxyadenosine + 2 L-methionine + 2 reduced [2Fe-2S]-[ferredoxin]. Its pathway is protein modification; protein lipoylation via endogenous pathway; protein N(6)-(lipoyl)lysine from octanoyl-[acyl-carrier-protein]: step 2/2. In terms of biological role, catalyzes the radical-mediated insertion of two sulfur atoms into the C-6 and C-8 positions of the octanoyl moiety bound to the lipoyl domains of lipoate-dependent enzymes, thereby converting the octanoylated domains into lipoylated derivatives. The protein is Lipoyl synthase of Xanthomonas campestris pv. campestris (strain B100).